We begin with the raw amino-acid sequence, 215 residues long: Large ribosomal subunit protein uL16m (215 aa).

The N-terminal 36 residues, 1–36 (MALQQYNKFPFFFSGILGPTRLNGLQMPPIQTMVRW), are a transit peptide targeting the mitochondrion.

The protein belongs to the universal ribosomal protein uL16 family. Component of the mitochondrial large ribosomal subunit (mt-LSU). Mature yeast 74S mitochondrial ribosomes consist of a small (37S) and a large (54S) subunit. The 37S small subunit contains a 15S ribosomal RNA (15S mt-rRNA) and at least 32 different proteins. The 54S large subunit contains a 21S rRNA (21S mt-rRNA) and at least 45 different proteins.

The protein localises to the mitochondrion. Its function is as follows. Component of the mitochondrial ribosome (mitoribosome), a dedicated translation machinery responsible for the synthesis of mitochondrial genome-encoded proteins, including at least some of the essential transmembrane subunits of the mitochondrial respiratory chain. The mitoribosomes are attached to the mitochondrial inner membrane and translation products are cotranslationally integrated into the membrane. This chain is Large ribosomal subunit protein uL16m (mrpl16), found in Schizosaccharomyces pombe (strain 972 / ATCC 24843) (Fission yeast).